The primary structure comprises 303 residues: Glycine--tRNA ligase alpha subunit (303 aa).

The protein belongs to the class-II aminoacyl-tRNA synthetase family. Tetramer of two alpha and two beta subunits.

It is found in the cytoplasm. The catalysed reaction is tRNA(Gly) + glycine + ATP = glycyl-tRNA(Gly) + AMP + diphosphate. This Erwinia tasmaniensis (strain DSM 17950 / CFBP 7177 / CIP 109463 / NCPPB 4357 / Et1/99) protein is Glycine--tRNA ligase alpha subunit.